The sequence spans 641 residues: Methylenetetrahydrofolate reductase 2 (641 aa).

Glu20 (proton donor/acceptor) is an active-site residue. NAD(+) is bound by residues Glu20–Lys25 and Thr52–Trp53. FAD is bound by residues Thr52–Trp53, His81, Arg111–Asp113, Tyr153, Asp172, and Lys179. Asp113 is a substrate binding site. Substrate is bound at residue Gln190.

Belongs to the methylenetetrahydrofolate reductase family. FAD serves as cofactor.

It catalyses the reaction (6S)-5-methyl-5,6,7,8-tetrahydrofolate + NADP(+) = (6R)-5,10-methylene-5,6,7,8-tetrahydrofolate + NADPH + H(+). It functions in the pathway one-carbon metabolism; tetrahydrofolate interconversion. Major methylenetetrahydrofolate reductase required to generate the methyl groups necessary for methionine synthetase to convert homocysteine to methionine. Performs 15 to 20 percent of the total methylenetetrahydrofolate reductase activity of the cells. This is Methylenetetrahydrofolate reductase 2 (met11) from Schizosaccharomyces pombe (strain 972 / ATCC 24843) (Fission yeast).